Consider the following 184-residue polypeptide: ATP synthase subunit b, chloroplastic (184 aa).

Residues Leu-27–Leu-49 form a helical membrane-spanning segment.

This sequence belongs to the ATPase B chain family. F-type ATPases have 2 components, F(1) - the catalytic core - and F(0) - the membrane proton channel. F(1) has five subunits: alpha(3), beta(3), gamma(1), delta(1), epsilon(1). F(0) has four main subunits: a(1), b(1), b'(1) and c(10-14). The alpha and beta chains form an alternating ring which encloses part of the gamma chain. F(1) is attached to F(0) by a central stalk formed by the gamma and epsilon chains, while a peripheral stalk is formed by the delta, b and b' chains.

The protein resides in the plastid. Its subcellular location is the chloroplast thylakoid membrane. Functionally, f(1)F(0) ATP synthase produces ATP from ADP in the presence of a proton or sodium gradient. F-type ATPases consist of two structural domains, F(1) containing the extramembraneous catalytic core and F(0) containing the membrane proton channel, linked together by a central stalk and a peripheral stalk. During catalysis, ATP synthesis in the catalytic domain of F(1) is coupled via a rotary mechanism of the central stalk subunits to proton translocation. In terms of biological role, component of the F(0) channel, it forms part of the peripheral stalk, linking F(1) to F(0). This is ATP synthase subunit b, chloroplastic from Pelargonium hortorum (Common geranium).